A 91-amino-acid polypeptide reads, in one-letter code: Protein sigN139 (91 aa).

N-linked (GlcNAc...) asparagine glycans are attached at residues N23 and N34. A helical membrane pass occupies residues 46–68 (LLPVVAFISGTVTSITGLVAGAL).

The protein resides in the membrane. This Dictyostelium discoideum (Social amoeba) protein is Protein sigN139.